The following is a 242-amino-acid chain: Glucosamine-6-phosphate deaminase (242 aa).

The active-site Proton acceptor; for enolization step is the D67. The active-site For ring-opening step is the N136. The active-site Proton acceptor; for ring-opening step is H138. The For ring-opening step role is filled by E143.

Belongs to the glucosamine/galactosamine-6-phosphate isomerase family. NagB subfamily.

The catalysed reaction is alpha-D-glucosamine 6-phosphate + H2O = beta-D-fructose 6-phosphate + NH4(+). Its pathway is amino-sugar metabolism; N-acetylneuraminate degradation; D-fructose 6-phosphate from N-acetylneuraminate: step 5/5. Catalyzes the reversible isomerization-deamination of glucosamine 6-phosphate (GlcN6P) to form fructose 6-phosphate (Fru6P) and ammonium ion. The chain is Glucosamine-6-phosphate deaminase from Clostridium perfringens (strain 13 / Type A).